We begin with the raw amino-acid sequence, 445 residues long: MCSIGEDDFGDEGGVHAMKEESPLPEGATTIEQEICRKCNDQRAVLKLNQKEPQCRECFLHYVRHKFRASLGATKIVRRGSKVMVVFNGAPENVVMLDMVRHGLEQEAFKKLRVDPVVVFVGEDFIGRDQEGYEQSVREKVQILRQFGFPAYYTVLGAQDSCSIEDNCLAGKFIGDQDKVTKVLQGIKSITSKQDFIVQTRKQTYKAIAKKLECGYIFLSSIGLELAKTLLSDVSLGRGKSLALDIAFCDDRDEERKIIRPMRDLNPEEIEYYLKFAENQLQSVAIVDPYLDKSSLQNLTSKFVDGLQLSFPSTVSTVFRTGDKLGAEKIPTCDNQLEDDDHFATLFDKSLKLESNAEEPRKCKFCHSALDYRDSTTLFATEFSRMVSSRINVQLSHEEIIESTKLMEQDACKLVNAELEDDEMRQLKRELCHACRNILVDFDGK.

Over residues 1–11 the composition is skewed to acidic residues; it reads MCSIGEDDFGD. A disordered region spans residues 1–26; the sequence is MCSIGEDDFGDEGGVHAMKEESPLPE. The segment covering 13 to 22 has biased composition (basic and acidic residues); that stretch reads GGVHAMKEES.

It belongs to the CTU2/NCS2 family.

It is found in the cytoplasm. It functions in the pathway tRNA modification; 5-methoxycarbonylmethyl-2-thiouridine-tRNA biosynthesis. In terms of biological role, plays a central role in 2-thiolation of mcm(5)S(2)U at tRNA wobble positions of tRNA(Lys), tRNA(Glu) and tRNA(Gln). May act by forming a heterodimer with NCS6/CTU1 that ligates sulfur from thiocarboxylated URM1 onto the uridine of tRNAs at wobble position. The sequence is that of Cytoplasmic tRNA 2-thiolation protein 2 from Aedes aegypti (Yellowfever mosquito).